Here is a 356-residue protein sequence, read N- to C-terminus: UDP-3-O-acylglucosamine N-acyltransferase (356 aa).

Histidine 242 functions as the Proton acceptor in the catalytic mechanism.

This sequence belongs to the transferase hexapeptide repeat family. LpxD subfamily. Homotrimer.

The catalysed reaction is a UDP-3-O-[(3R)-3-hydroxyacyl]-alpha-D-glucosamine + a (3R)-hydroxyacyl-[ACP] = a UDP-2-N,3-O-bis[(3R)-3-hydroxyacyl]-alpha-D-glucosamine + holo-[ACP] + H(+). The protein operates within bacterial outer membrane biogenesis; LPS lipid A biosynthesis. Its function is as follows. Catalyzes the N-acylation of UDP-3-O-acylglucosamine using 3-hydroxyacyl-ACP as the acyl donor. Is involved in the biosynthesis of lipid A, a phosphorylated glycolipid that anchors the lipopolysaccharide to the outer membrane of the cell. This Acinetobacter baylyi (strain ATCC 33305 / BD413 / ADP1) protein is UDP-3-O-acylglucosamine N-acyltransferase.